The following is a 510-amino-acid chain: Inositol-3-phosphate synthase (510 aa).

NAD(+) is bound by residues glycine 70, glycine 71, asparagine 72, asparagine 73, aspartate 143, isoleucine 180, glutamine 190, arginine 193, threonine 230, alanine 231, asparagine 232, threonine 233, glycine 281, serine 282, aspartate 306, serine 309, asparagine 340, asparagine 341, aspartate 342, lysine 355, glycine 393, aspartate 394, aspartate 422, and serine 423.

It belongs to the myo-inositol 1-phosphate synthase family. The cofactor is NAD(+).

The protein localises to the cytoplasm. It is found in the cytosol. It localises to the nucleus. It catalyses the reaction D-glucose 6-phosphate = 1D-myo-inositol 3-phosphate. It participates in polyol metabolism; myo-inositol biosynthesis; myo-inositol from D-glucose 6-phosphate: step 1/2. In terms of biological role, key enzyme in myo-inositol biosynthesis pathway that catalyzes the conversion of glucose 6-phosphate to 1-myo-inositol 1-phosphate in a NAD-dependent manner. In Nicotiana tabacum (Common tobacco), this protein is Inositol-3-phosphate synthase.